Here is a 512-residue protein sequence, read N- to C-terminus: tRNA-2-methylthio-N(6)-dimethylallyladenosine synthase (512 aa).

An MTTase N-terminal domain is found at 23-139 (RTYQVRTYGC…LPTLLERARH (117 aa)). Cysteine 32, cysteine 68, cysteine 102, cysteine 176, cysteine 180, and cysteine 183 together coordinate [4Fe-4S] cluster. The Radical SAM core domain maps to 162–398 (RESAYAAWVS…IELQERISLE (237 aa)). The region spanning 401-469 (REQVGRAVEL…PHHLIADAPI (69 aa)) is the TRAM domain. The disordered stretch occupies residues 477 to 512 (AGDAHAAGQKPRTGVGLGMPRIGAPAPSATAEGCGC).

This sequence belongs to the methylthiotransferase family. MiaB subfamily. As to quaternary structure, monomer. It depends on [4Fe-4S] cluster as a cofactor.

Its subcellular location is the cytoplasm. The enzyme catalyses N(6)-dimethylallyladenosine(37) in tRNA + (sulfur carrier)-SH + AH2 + 2 S-adenosyl-L-methionine = 2-methylsulfanyl-N(6)-dimethylallyladenosine(37) in tRNA + (sulfur carrier)-H + 5'-deoxyadenosine + L-methionine + A + S-adenosyl-L-homocysteine + 2 H(+). Catalyzes the methylthiolation of N6-(dimethylallyl)adenosine (i(6)A), leading to the formation of 2-methylthio-N6-(dimethylallyl)adenosine (ms(2)i(6)A) at position 37 in tRNAs that read codons beginning with uridine. The protein is tRNA-2-methylthio-N(6)-dimethylallyladenosine synthase of Mycolicibacterium smegmatis (strain ATCC 700084 / mc(2)155) (Mycobacterium smegmatis).